Here is a 966-residue protein sequence, read N- to C-terminus: Phosphoenolpyruvate carboxylase, housekeeping isozyme (966 aa).

The residue at position 11 (S11) is a Phosphoserine. Active-site residues include H172 and K601.

The protein belongs to the PEPCase type 1 family. Homotetramer. Requires Mg(2+) as cofactor.

It localises to the cytoplasm. The catalysed reaction is oxaloacetate + phosphate = phosphoenolpyruvate + hydrogencarbonate. With respect to regulation, by light-reversible phosphorylation. Functionally, through the carboxylation of phosphoenolpyruvate (PEP) it forms oxaloacetate, a four-carbon dicarboxylic acid source for the tricarboxylic acid cycle. This is Phosphoenolpyruvate carboxylase, housekeeping isozyme from Saccharum hybrid (Sugarcane).